Reading from the N-terminus, the 126-residue chain is Large ribosomal subunit protein bL17 (126 aa).

The protein belongs to the bacterial ribosomal protein bL17 family. In terms of assembly, part of the 50S ribosomal subunit. Contacts protein L32.

This is Large ribosomal subunit protein bL17 from Coxiella burnetii (strain CbuG_Q212) (Coxiella burnetii (strain Q212)).